Consider the following 486-residue polypeptide: Serralysin (486 aa).

Residue His187 participates in Zn(2+) binding. Glu188 is a catalytic residue. The Zn(2+) site is built by His191 and His197. Positions 266, 269, 298, 300, 301, 303, 340, and 342 each coordinate Ca(2+). 2 Hemolysin-type calcium-binding repeats span residues Ile345–Leu362 and Lys363–Leu380.

Belongs to the peptidase M10B family. It depends on Zn(2+) as a cofactor. Ca(2+) is required as a cofactor.

It localises to the secreted. The enzyme catalyses Preferential cleavage of bonds with hydrophobic residues in P1'.. This Photorhabdus luminescens (Xenorhabdus luminescens) protein is Serralysin (prtA1).